We begin with the raw amino-acid sequence, 278 residues long: Large ribosomal subunit protein uL2 (278 aa).

Disordered regions lie at residues 32-54 (SLCR…TRHI) and 221-278 (RGMT…RNAK). Residues 232 to 245 (NGGGEGKSKSGGGR) are compositionally biased toward gly residues.

It belongs to the universal ribosomal protein uL2 family. As to quaternary structure, part of the 50S ribosomal subunit. Forms a bridge to the 30S subunit in the 70S ribosome.

Functionally, one of the primary rRNA binding proteins. Required for association of the 30S and 50S subunits to form the 70S ribosome, for tRNA binding and peptide bond formation. It has been suggested to have peptidyltransferase activity; this is somewhat controversial. Makes several contacts with the 16S rRNA in the 70S ribosome. In Akkermansia muciniphila (strain ATCC BAA-835 / DSM 22959 / JCM 33894 / BCRC 81048 / CCUG 64013 / CIP 107961 / Muc), this protein is Large ribosomal subunit protein uL2.